The following is a 248-amino-acid chain: MYKLVLVRHGESEWNKENLFTGWTDVKLSDKGVDEAIEAGLLLKQEGYFFDIAFSSLLSRANDTLNIILKELGQSYISVKKTWRLNERHYGALQGLNKSETAAKYGEDKVLIWRRSYDVPPMSLDESDDRHPIKDPRYKYIPKRELPSTECLKDTIARVIPYWIDEIAKEILEGKKVIVAAHGNSLRALVKYLDNLSEEDVLKLNIPTGIPLVYELDKDLNPIKHYYLGDENKIKKAMESVASQGKLR.

Substrate-binding positions include Arg8–Asn15, Thr21–Gly22, Arg60, Glu87–Tyr90, Lys98, Arg114–Arg115, and Gly183–Asn184. The active-site Tele-phosphohistidine intermediate is the His9. Glu87 functions as the Proton donor/acceptor in the catalytic mechanism.

This sequence belongs to the phosphoglycerate mutase family. BPG-dependent PGAM subfamily.

It catalyses the reaction (2R)-2-phosphoglycerate = (2R)-3-phosphoglycerate. The protein operates within carbohydrate degradation; glycolysis; pyruvate from D-glyceraldehyde 3-phosphate: step 3/5. Functionally, catalyzes the interconversion of 2-phosphoglycerate and 3-phosphoglycerate. The polypeptide is 2,3-bisphosphoglycerate-dependent phosphoglycerate mutase (Borreliella afzelii (strain PKo) (Borrelia afzelii)).